We begin with the raw amino-acid sequence, 652 residues long: DNA ligase (652 aa).

Residues 29–33 (DSQYD), 78–79 (SL), and Glu-107 contribute to the NAD(+) site. Residue Lys-109 is the N6-AMP-lysine intermediate of the active site. NAD(+) is bound by residues Arg-130, Glu-164, Lys-278, and Lys-302. 4 residues coordinate Zn(2+): Cys-395, Cys-398, Cys-413, and Cys-418. The BRCT domain maps to 577–652 (STDAQLSGLT…IQDEDWLLNL (76 aa)).

It belongs to the NAD-dependent DNA ligase family. LigA subfamily. Mg(2+) serves as cofactor. It depends on Mn(2+) as a cofactor.

The catalysed reaction is NAD(+) + (deoxyribonucleotide)n-3'-hydroxyl + 5'-phospho-(deoxyribonucleotide)m = (deoxyribonucleotide)n+m + AMP + beta-nicotinamide D-nucleotide.. DNA ligase that catalyzes the formation of phosphodiester linkages between 5'-phosphoryl and 3'-hydroxyl groups in double-stranded DNA using NAD as a coenzyme and as the energy source for the reaction. It is essential for DNA replication and repair of damaged DNA. In Streptococcus agalactiae serotype V (strain ATCC BAA-611 / 2603 V/R), this protein is DNA ligase.